The chain runs to 180 residues: Large ribosomal subunit protein uL6 (180 aa).

It belongs to the universal ribosomal protein uL6 family. As to quaternary structure, part of the 50S ribosomal subunit.

Its function is as follows. This protein binds to the 23S rRNA, and is important in its secondary structure. It is located near the subunit interface in the base of the L7/L12 stalk, and near the tRNA binding site of the peptidyltransferase center. This is Large ribosomal subunit protein uL6 from Salinispora arenicola (strain CNS-205).